Here is a 133-residue protein sequence, read N- to C-terminus: Salivary cystatin-L (133 aa).

The N-terminal stretch at 1–19 is a signal peptide; that stretch reads MTASFALVLLLGGVAVCIA. The Cystatin domain occupies 29 to 115; that stretch reads KANHQANPEY…VAQRTCTTVV (87 aa).

The protein belongs to the cystatin family. As to expression, salivary gland.

The protein localises to the secreted. Functionally, inhibitor of cysteine proteinases. Inhibits host cathepsin L (CTSL) and S (CTSS). Modulates production of various cytokines and chemokines in lipopolysaccharide (LPS)-stimulated mouse dendritic cell. Suppresses maturation of mouse bone-marrow-derived dendritic cells (BMDCs). The chain is Salivary cystatin-L from Ixodes persulcatus (Taiga tick).